The primary structure comprises 241 residues: Uridylate kinase (241 aa).

Position 14–17 (14–17) interacts with ATP; the sequence is KASG. Positions 22 to 27 are involved in allosteric activation by GTP; the sequence is GDQGFG. Gly-56 is a UMP binding site. Residues Gly-57 and Arg-61 each contribute to the ATP site. UMP is bound by residues Asp-76 and 137–144; that span reads TGNPFFTT. Thr-164, Gln-165, Tyr-170, and Asp-173 together coordinate ATP.

It belongs to the UMP kinase family. As to quaternary structure, homohexamer.

It is found in the cytoplasm. It carries out the reaction UMP + ATP = UDP + ADP. It functions in the pathway pyrimidine metabolism; CTP biosynthesis via de novo pathway; UDP from UMP (UMPK route): step 1/1. With respect to regulation, allosterically activated by GTP. Inhibited by UTP. In terms of biological role, catalyzes the reversible phosphorylation of UMP to UDP. This Agrobacterium fabrum (strain C58 / ATCC 33970) (Agrobacterium tumefaciens (strain C58)) protein is Uridylate kinase.